The primary structure comprises 330 residues: Glycerol-3-phosphate dehydrogenase [NAD(P)+] (330 aa).

Residues serine 10, tryptophan 11, arginine 31, and lysine 105 each coordinate NADPH. Residues lysine 105, glycine 135, and serine 137 each contribute to the sn-glycerol 3-phosphate site. Alanine 139 contacts NADPH. Sn-glycerol 3-phosphate-binding residues include lysine 190, aspartate 243, serine 253, arginine 254, and asparagine 255. The active-site Proton acceptor is the lysine 190. Arginine 254 contributes to the NADPH binding site. NADPH is bound by residues valine 278 and glutamate 280.

Belongs to the NAD-dependent glycerol-3-phosphate dehydrogenase family.

It is found in the cytoplasm. It catalyses the reaction sn-glycerol 3-phosphate + NAD(+) = dihydroxyacetone phosphate + NADH + H(+). The enzyme catalyses sn-glycerol 3-phosphate + NADP(+) = dihydroxyacetone phosphate + NADPH + H(+). It functions in the pathway membrane lipid metabolism; glycerophospholipid metabolism. Its function is as follows. Catalyzes the reduction of the glycolytic intermediate dihydroxyacetone phosphate (DHAP) to sn-glycerol 3-phosphate (G3P), the key precursor for phospholipid synthesis. This Solidesulfovibrio magneticus (strain ATCC 700980 / DSM 13731 / RS-1) (Desulfovibrio magneticus) protein is Glycerol-3-phosphate dehydrogenase [NAD(P)+].